We begin with the raw amino-acid sequence, 280 residues long: MRWPPWSSKTQEPTIADDKQQNCTSLLPVTTNQTDKAAILDWAAFTELRTLIPTLILTTAILSAARFHRSYLRRFPDAPSIDAAYFRRRSIYGKVTSVGDGDNFRIFHTPGGRLAGWELLPWKRIPKGKKELRDNTIHVRLAGIDAPELAHFGRPEQPYAREAHEWLTSYLLSRRVRAYLHRPDQYQRVVATVYVRRVLDFPIPFRRRDVSYEMLRRGLATVYEAKSGAEFGGDAIEAKYRNAEWWAKLKGNGMWKGFRRNKEFESPREYKTRVGLEEKK.

Residues 50 to 67 form a helical membrane-spanning segment; the sequence is TLIPTLILTTAILSAARF. The TNase-like domain occupies 89 to 257; that stretch reads RSIYGKVTSV…KLKGNGMWKG (169 aa). The active site involves arginine 140. A Ca(2+)-binding site is contributed by aspartate 145. Residues glutamate 148 and arginine 188 contribute to the active site.

It belongs to the LCL3 family.

The protein resides in the mitochondrion. Its subcellular location is the membrane. In Emericella nidulans (strain FGSC A4 / ATCC 38163 / CBS 112.46 / NRRL 194 / M139) (Aspergillus nidulans), this protein is Probable endonuclease lcl3 (lcl3).